We begin with the raw amino-acid sequence, 576 residues long: Proline--tRNA ligase (576 aa).

This sequence belongs to the class-II aminoacyl-tRNA synthetase family. ProS type 1 subfamily. Homodimer.

Its subcellular location is the cytoplasm. It catalyses the reaction tRNA(Pro) + L-proline + ATP = L-prolyl-tRNA(Pro) + AMP + diphosphate. Functionally, catalyzes the attachment of proline to tRNA(Pro) in a two-step reaction: proline is first activated by ATP to form Pro-AMP and then transferred to the acceptor end of tRNA(Pro). As ProRS can inadvertently accommodate and process non-cognate amino acids such as alanine and cysteine, to avoid such errors it has two additional distinct editing activities against alanine. One activity is designated as 'pretransfer' editing and involves the tRNA(Pro)-independent hydrolysis of activated Ala-AMP. The other activity is designated 'posttransfer' editing and involves deacylation of mischarged Ala-tRNA(Pro). The misacylated Cys-tRNA(Pro) is not edited by ProRS. The protein is Proline--tRNA ligase of Leptospira borgpetersenii serovar Hardjo-bovis (strain JB197).